A 471-amino-acid chain; its full sequence is Collagen alpha-3(IV) chain (471 aa).

Positions 1–238 (GLPGRKGPVG…KGKPGDTGPP (238 aa)) are triple-helical region. The interval 1 to 241 (GLPGRKGPVG…PGDTGPPAAG (241 aa)) is disordered. Pro residues predominate over residues 52-61 (MPGPPGPPGS). The Cell attachment site motif lies at 106–108 (RGD). A compositionally biased stretch (pro residues) spans 127 to 141 (PGPPGPPGQSGPKGP). A compositionally biased stretch (low complexity) spans 165-174 (SAGEPGMQGE). Residues 175 to 187 (PGPPGPPGDPGPC) are compositionally biased toward pro residues. Pro-232 and Pro-238 each carry hydroxyproline. The Collagen IV NC1 domain maps to 246 to 470 (GFVFTRHSQT…SRCQVCMKMR (225 aa)). 6 disulfide bridges follow: Cys-261/Cys-352, Cys-294/Cys-349, Cys-306/Cys-312, Cys-371/Cys-466, Cys-405/Cys-463, and Cys-417/Cys-423. Met-334 is covalently cross-linked (S-Lysyl-methionine sulfilimine (Met-Lys) (interchain with K-452)). Lys-452 participates in a covalent cross-link: S-Lysyl-methionine sulfilimine (Lys-Met) (interchain with M-334).

The protein belongs to the type IV collagen family. There are six type IV collagen isoforms, alpha 1(IV)-alpha 6(IV), each of which can form a triple helix structure with 2 other chains to generate type IV collagen network. The alpha 3(IV) chain forms a triple helical protomer with alpha 4(IV) and alpha 5(IV); this triple helical structure dimerizes through NC1-NC1 domain interactions such that the alpha 3(IV), alpha 4(IV) and alpha 5(IV) chains of one protomer connect with the alpha 5(IV), alpha 4(IV) and alpha 3(IV) chains of the opposite promoter, respectively. Interacts with ITGB3. Associates with LAMB2 at the neuromuscular junction and in GBM. Post-translationally, prolines at the third position of the tripeptide repeating unit (G-X-Y) are hydroxylated in some or all of the chains. In terms of processing, type IV collagens contain numerous cysteine residues which are involved in inter- and intramolecular disulfide bonding. 12 of these, located in the NC1 domain, are conserved in all known type IV collagens. The trimeric structure of the NC1 domains is stabilized by covalent bonds between Lys and Met residues. Post-translationally, phosphorylated. Thought to be phosphorylated by CERT, but CERT does not have kinase activity.

The protein resides in the secreted. The protein localises to the extracellular space. It localises to the extracellular matrix. Its subcellular location is the basement membrane. Its function is as follows. Type IV collagen is the major structural component of glomerular basement membranes (GBM), forming a 'chicken-wire' meshwork together with laminins, proteoglycans and entactin/nidogen. This chain is Collagen alpha-3(IV) chain (COL4A3), found in Bos taurus (Bovine).